Here is a 421-residue protein sequence, read N- to C-terminus: UDP-N-acetylglucosamine 1-carboxyvinyltransferase (421 aa).

A phosphoenolpyruvate-binding site is contributed by 22 to 23; sequence KN. Arg-93 is a binding site for UDP-N-acetyl-alpha-D-glucosamine. Cys-117 serves as the catalytic Proton donor. 2-(S-cysteinyl)pyruvic acid O-phosphothioketal is present on Cys-117. UDP-N-acetyl-alpha-D-glucosamine contacts are provided by residues 122–126, Asp-308, and Ile-330; that span reads RPVDL.

The protein belongs to the EPSP synthase family. MurA subfamily.

Its subcellular location is the cytoplasm. The catalysed reaction is phosphoenolpyruvate + UDP-N-acetyl-alpha-D-glucosamine = UDP-N-acetyl-3-O-(1-carboxyvinyl)-alpha-D-glucosamine + phosphate. It functions in the pathway cell wall biogenesis; peptidoglycan biosynthesis. In terms of biological role, cell wall formation. Adds enolpyruvyl to UDP-N-acetylglucosamine. This Pseudomonas entomophila (strain L48) protein is UDP-N-acetylglucosamine 1-carboxyvinyltransferase.